The following is a 309-amino-acid chain: MKQMNKLITGVVTLATVVTLSACQSSHNNTKLVSMKGDTITVSDFYNETKNTELAQKAMLSLVISRVFETQYANKVSDKEVEKAYKQTADQYGTSFKTVLAQSGLTPETYKKQIRLTKLVEYAVKEQAKNETISKKDYRQAYDAYTPTMTAEIMQFEKEEDAKAALEAVKAEGADFAAIAKEKTTAADKKTTYTFDSGETTLPAEVVRAASGLKEGNRSEIITALDPATSKRTYHIIKVTKKATKKADWKAYQKRLKDIIVTGKLKDPDFQNKVIAKALDKANVKIKDKAFANILAQFAKPNQKQPAQK.

Residues Met1 to Ala22 form the signal peptide. The N-palmitoyl cysteine moiety is linked to residue Cys23. Cys23 carries S-diacylglycerol cysteine lipidation. One can recognise a PpiC domain in the interval Thr146–Lys241.

Belongs to the PrsA family.

It is found in the cell membrane. The enzyme catalyses [protein]-peptidylproline (omega=180) = [protein]-peptidylproline (omega=0). In terms of biological role, plays a major role in protein secretion by helping the post-translocational extracellular folding of several secreted proteins. The sequence is that of Foldase protein PrsA 2 (prsA2) from Streptococcus pyogenes serotype M1.